Here is a 507-residue protein sequence, read N- to C-terminus: Probable aldehyde dehydrogenase (507 aa).

219–225 (GFGVEAG) is an NAD(+) binding site. Residues Glu-263 and Cys-302 contribute to the active site.

Belongs to the aldehyde dehydrogenase family.

It carries out the reaction an aldehyde + NAD(+) + H2O = a carboxylate + NADH + 2 H(+). The protein is Probable aldehyde dehydrogenase of Streptomyces coelicolor (strain ATCC BAA-471 / A3(2) / M145).